Here is a 576-residue protein sequence, read N- to C-terminus: Ecdysone receptor (576 aa).

The segment at 1–162 (MSLGARGYRR…GPAPRQQEEL (162 aa)) is modulating. The interval 87 to 154 (CTMEQQQPQP…GEARRQKKGP (68 aa)) is disordered. The span at 91–106 (QQQPQPQQQPQQTQPL) shows a compositional bias: low complexity. Pro residues predominate over residues 107–117 (PSMPLPMPPTT). 2 NR C4-type zinc fingers span residues 163–183 (CLVC…CEGC) and 199–223 (CKFG…LKKC). A DNA-binding region (nuclear receptor) is located at residues 163-235 (CLVCGDRASG…VGMRPECVVP (73 aa)). Positions 245–269 (EKKAQREKDKLPVSTTTVDDHMPPI) are disordered. Positions 314–548 (NQKSLIARLV…FLEEIWDVAD (235 aa)) constitute an NR LBD domain.

The protein belongs to the nuclear hormone receptor family. NR1 subfamily.

It is found in the nucleus. In terms of biological role, receptor for ecdysone. Binds to ecdysone response elements (ECRES). The polypeptide is Ecdysone receptor (EcR) (Heliothis virescens (Tobacco budworm moth)).